We begin with the raw amino-acid sequence, 833 residues long: A disintegrin and metalloproteinase with thrombospondin motifs 4 (833 aa).

The signal sequence occupies residues 1–49 (MSQMGLHPRRGLTGHWLQRFQPCLPLHTVQWRRLLLLAFLLSLAWPASP). Residues 50 to 208 (LPREEEIVFP…PSPISRRTKR (159 aa)) constitute a propeptide that is removed on maturation. Asn-63 carries N-linked (GlcNAc...) asparagine glycosylation. Positions 180–204 (KSPASSQGPMCTVKAPSGSPSPISR) are disordered. A Cysteine switch motif is present at residues 188–195 (PMCTVKAP). Cys-190 is a binding site for Zn(2+). The Peptidase M12B domain maps to 214–424 (RFVETLVVAD…GYGHCLLDKP (211 aa)). 11 cysteine pairs are disulfide-bonded: Cys-289-Cys-341, Cys-318-Cys-323, Cys-335-Cys-419, Cys-373-Cys-403, Cys-445-Cys-468, Cys-456-Cys-478, Cys-463-Cys-497, Cys-491-Cys-502, Cys-528-Cys-565, Cys-532-Cys-570, and Cys-543-Cys-555. N-linked (GlcNAc...) asparagine glycosylation is present at Asn-299. His-357 is a binding site for Zn(2+). Residue Glu-358 is part of the active site. Zn(2+) contacts are provided by His-361 and His-367. A Disintegrin domain is found at 433 to 515 (TFPGKDYDAD…DQLKDFNVPQ (83 aa)). Positions 516 to 571 (AGGWGPWGPWGDCSRTCGGGVQFSSRDCTRPVPRNGGKYCEGRRTRFRSCNTENCP) constitute a TSP type-1 domain. The interval 682–833 (SKQSGSFKKF…LRKRPWAGRK (152 aa)) is spacer.

As to quaternary structure, interacts with SRPX2. Zn(2+) is required as a cofactor. The precursor is cleaved by a furin endopeptidase. In terms of processing, glycosylated. Can be O-fucosylated by POFUT2 on a serine or a threonine residue found within the consensus sequence C1-X(2)-(S/T)-C2-G of the TSP type-1 repeat domains where C1 and C2 are the first and second cysteine residue of the repeat, respectively. Fucosylated repeats can then be further glycosylated by the addition of a beta-1,3-glucose residue by the glucosyltransferase, B3GALTL. Fucosylation mediates the efficient secretion of ADAMTS family members. Can also be C-glycosylated with one or two mannose molecules on tryptophan residues within the consensus sequence W-X-X-W of the TPRs, and N-glycosylated. These other glycosylations can also facilitate secretion.

Its subcellular location is the secreted. It localises to the extracellular space. The protein resides in the extracellular matrix. It carries out the reaction Glutamyl endopeptidase. Bonds cleaved include 370-Thr-Glu-Gly-Glu-|-Ala-Arg-Gly-Ser-377 in the interglobular domain of mammalian aggrecan.. Its function is as follows. Cleaves aggrecan, a cartilage proteoglycan, at the '392-Glu-|-Ala-393' site and may be involved in its turnover. Also cleaves COMP. May play an important role in the destruction of aggrecan in arthritic diseases. The protein is A disintegrin and metalloproteinase with thrombospondin motifs 4 (Adamts4) of Mus musculus (Mouse).